The sequence spans 315 residues: Olfactory receptor 56A3 (315 aa).

The Extracellular segment spans residues 1–29 (MTTHRNDTLSTEASDFLLNCFVRSPSWQH). An N-linked (GlcNAc...) asparagine glycan is attached at Asn-6. A helical transmembrane segment spans residues 30-50 (WLSLPLSLLFLLAVGANTTLL). The Cytoplasmic segment spans residues 51 to 58 (MTIWLEAS). A helical membrane pass occupies residues 59–79 (LHQPLYYLLSLLSLLDIVLCL). The Extracellular segment spans residues 80–103 (TVIPKVLTIFWFDLRPISFPACFL). A disulfide bond links Cys-101 and Cys-193. Residues 104–124 (QMYIMNCFLAMESCTFMVMAY) form a helical membrane-spanning segment. At 125-143 (DRYVAICHPLRYPSIITDH) the chain is on the cytoplasmic side. A helical transmembrane segment spans residues 144-164 (FVVKAAMFILTRNVLMTLPIP). The Extracellular segment spans residues 165–200 (ILSAQLRYCGRNVIENCICANMSVSRLSCDDVTINH). Residue Asn-185 is glycosylated (N-linked (GlcNAc...) asparagine). A helical transmembrane segment spans residues 201–221 (LYQFAGGWTLLGSDLILIFLS). Residues 222–241 (YTFILRAVLRLKAEGAVAKA) are Cytoplasmic-facing. Residues 242–262 (LSTCGSHFMLILFFSTILLVF) traverse the membrane as a helical segment. The Extracellular segment spans residues 263–277 (VLTHVAKKKVSPDVP). A helical membrane pass occupies residues 278–298 (VLLNVLHHVIPAALNPIIYGV). The Cytoplasmic segment spans residues 299-315 (RTQEIKQGMQRLLKKGC).

The protein belongs to the G-protein coupled receptor 1 family.

The protein localises to the cell membrane. Odorant receptor. The polypeptide is Olfactory receptor 56A3 (OR56A3) (Homo sapiens (Human)).